Consider the following 203-residue polypeptide: Peptidyl-tRNA hydrolase (203 aa).

Tyrosine 18 is a binding site for tRNA. Histidine 23 (proton acceptor) is an active-site residue. TRNA is bound by residues phenylalanine 69, asparagine 71, and asparagine 117.

Belongs to the PTH family. In terms of assembly, monomer.

The protein localises to the cytoplasm. It carries out the reaction an N-acyl-L-alpha-aminoacyl-tRNA + H2O = an N-acyl-L-amino acid + a tRNA + H(+). Its function is as follows. Hydrolyzes ribosome-free peptidyl-tRNAs (with 1 or more amino acids incorporated), which drop off the ribosome during protein synthesis, or as a result of ribosome stalling. Functionally, catalyzes the release of premature peptidyl moieties from peptidyl-tRNA molecules trapped in stalled 50S ribosomal subunits, and thus maintains levels of free tRNAs and 50S ribosomes. The protein is Peptidyl-tRNA hydrolase of Prochlorococcus marinus subsp. pastoris (strain CCMP1986 / NIES-2087 / MED4).